Here is a 288-residue protein sequence, read N- to C-terminus: MGPTAAGKSDLGIELALALGGEVVNADSMQLYRGMDIGTAKVPLEQRRGVPHHLLDVWDVTRAADVASFQADARRVIDGLLAVGRTPVLVGGSGLYLRAALDDLTFPGTDPAVRARWERELASRGAPALHGELARLAPRAAAAILPTNGRRIVRALEVVELTGTFEATLPEHRSVYDVVQIGIDRTDLDERIVERVERMWGAGFPDEVRRLAEMGLREGRTASRALGYAQLLAWFDGAMDSAEEAKQATITATRRFARRQRSWFRRDERIVWLDQPDVTQVLRLVGSL.

2–9 is a binding site for ATP; sequence GPTAAGKS. 4 to 9 lines the substrate pocket; it reads TAAGKS. The segment at 27-30 is interaction with substrate tRNA; it reads DSMQ.

This sequence belongs to the IPP transferase family. In terms of assembly, monomer. Mg(2+) serves as cofactor.

It carries out the reaction adenosine(37) in tRNA + dimethylallyl diphosphate = N(6)-dimethylallyladenosine(37) in tRNA + diphosphate. Its function is as follows. Catalyzes the transfer of a dimethylallyl group onto the adenine at position 37 in tRNAs that read codons beginning with uridine, leading to the formation of N6-(dimethylallyl)adenosine (i(6)A). The sequence is that of tRNA dimethylallyltransferase from Frankia alni (strain DSM 45986 / CECT 9034 / ACN14a).